Here is a 254-residue protein sequence, read N- to C-terminus: Flagellar L-ring protein 1 (254 aa).

A signal peptide spans M1–A26.

This sequence belongs to the FlgH family. In terms of assembly, the basal body constitutes a major portion of the flagellar organelle and consists of four rings (L,P,S, and M) mounted on a central rod.

The protein localises to the cell outer membrane. It localises to the bacterial flagellum basal body. Its function is as follows. Assembles around the rod to form the L-ring and probably protects the motor/basal body from shearing forces during rotation. In Bradyrhizobium diazoefficiens (strain JCM 10833 / BCRC 13528 / IAM 13628 / NBRC 14792 / USDA 110), this protein is Flagellar L-ring protein 1 (flgH1).